We begin with the raw amino-acid sequence, 163 residues long: Lipoprotein signal peptidase (163 aa).

Transmembrane regions (helical) follow at residues 9–29 (AWPW…SKYL), 42–62 (ILPF…SFLG), 67–87 (WQII…ILWL), and 93–113 (SEIM…GNFI). Catalysis depends on residues D123 and D141. A helical transmembrane segment spans residues 137–157 (FNVADSAICVGVFLLIVHMLL).

Belongs to the peptidase A8 family.

The protein resides in the cell inner membrane. It carries out the reaction Release of signal peptides from bacterial membrane prolipoproteins. Hydrolyzes -Xaa-Yaa-Zaa-|-(S,diacylglyceryl)Cys-, in which Xaa is hydrophobic (preferably Leu), and Yaa (Ala or Ser) and Zaa (Gly or Ala) have small, neutral side chains.. Its pathway is protein modification; lipoprotein biosynthesis (signal peptide cleavage). Its function is as follows. This protein specifically catalyzes the removal of signal peptides from prolipoproteins. In Coxiella burnetii (strain RSA 331 / Henzerling II), this protein is Lipoprotein signal peptidase.